The following is a 462-amino-acid chain: Glycine--tRNA ligase (462 aa).

Substrate contacts are provided by R100 and E174. Residues 206 to 208, 216 to 221, 290 to 291, and 334 to 337 each bind ATP; these read RNE, FRTREF, EL, and GADR. 221 to 225 is a binding site for substrate; that stretch reads FEQME. 330-334 contacts substrate; it reads EPSLG.

It belongs to the class-II aminoacyl-tRNA synthetase family. As to quaternary structure, homodimer.

The protein resides in the cytoplasm. The enzyme catalyses tRNA(Gly) + glycine + ATP = glycyl-tRNA(Gly) + AMP + diphosphate. Functionally, catalyzes the attachment of glycine to tRNA(Gly). The protein is Glycine--tRNA ligase of Acetivibrio thermocellus (strain ATCC 27405 / DSM 1237 / JCM 9322 / NBRC 103400 / NCIMB 10682 / NRRL B-4536 / VPI 7372) (Clostridium thermocellum).